The sequence spans 142 residues: D-aminoacyl-tRNA deacylase (142 aa).

The Gly-cisPro motif, important for rejection of L-amino acids signature appears at 133-134 (GP).

This sequence belongs to the DTD family. As to quaternary structure, homodimer.

Its subcellular location is the cytoplasm. It carries out the reaction glycyl-tRNA(Ala) + H2O = tRNA(Ala) + glycine + H(+). It catalyses the reaction a D-aminoacyl-tRNA + H2O = a tRNA + a D-alpha-amino acid + H(+). An aminoacyl-tRNA editing enzyme that deacylates mischarged D-aminoacyl-tRNAs. Also deacylates mischarged glycyl-tRNA(Ala), protecting cells against glycine mischarging by AlaRS. Acts via tRNA-based rather than protein-based catalysis; rejects L-amino acids rather than detecting D-amino acids in the active site. By recycling D-aminoacyl-tRNA to D-amino acids and free tRNA molecules, this enzyme counteracts the toxicity associated with the formation of D-aminoacyl-tRNA entities in vivo and helps enforce protein L-homochirality. This is D-aminoacyl-tRNA deacylase from Acidothermus cellulolyticus (strain ATCC 43068 / DSM 8971 / 11B).